Reading from the N-terminus, the 252-residue chain is Cyclic di-GMP binding protein VCA0042 (252 aa).

Over residues 1–11 (MNSRPAEKIDN) the composition is skewed to basic and acidic residues. Positions 1 to 24 (MNSRPAEKIDNNDGQTETPRSKTV) are disordered. Polar residues predominate over residues 12 to 24 (NDGQTETPRSKTV). Positions 134 to 233 (QLRKEPRFEL…EEGRNNAKNL (100 aa)) constitute a PilZ domain.

The protein belongs to the YcgR family. As to quaternary structure, dimer.

The protein localises to the bacterial flagellum basal body. Functionally, may act as a flagellar brake, regulating swimming and swarming in a bis-(3'-5') cyclic diguanylic acid (c-di-GMP)-dependent manner. Increasing levels of c-di-GMP lead to decreased motility (Potential). Binds bis-(3'-5') cyclic diguanylic acid (c-di-GMP) with a dissociation constant of 170 nM in the presence of 10 mM KCl and with 100 nM in its absence. Binds 1 to 2 c-di-GMP per subunit. Only 1 c-di-GMP is seen in the wild-type crystal, while 2 are seen in the mutant. Depending on the concentration of K(+) stoichiometries of 1:1, 1.43:1 and 2:1 are determined by isothermal titration calorimetry. The polypeptide is Cyclic di-GMP binding protein VCA0042 (Vibrio cholerae serotype O1 (strain ATCC 39315 / El Tor Inaba N16961)).